The chain runs to 382 residues: Galactokinase (382 aa).

Residue 34–37 (EHTD) coordinates substrate. Residue 124–130 (GAGLSSS) participates in ATP binding. Residues S130 and E162 each contribute to the Mg(2+) site. The Proton acceptor role is filled by D174. Y223 contributes to the substrate binding site.

It belongs to the GHMP kinase family. GalK subfamily.

It is found in the cytoplasm. The catalysed reaction is alpha-D-galactose + ATP = alpha-D-galactose 1-phosphate + ADP + H(+). Its pathway is carbohydrate metabolism; galactose metabolism. Functionally, catalyzes the transfer of the gamma-phosphate of ATP to D-galactose to form alpha-D-galactose-1-phosphate (Gal-1-P). This is Galactokinase from Salmonella gallinarum (strain 287/91 / NCTC 13346).